Consider the following 204-residue polypeptide: Dephospho-CoA kinase (204 aa).

In terms of domain architecture, DPCK spans 4–201 (VIGLTGGIAS…EKYLAMCKKN (198 aa)). 12–17 (ASGKTT) is an ATP binding site.

It belongs to the CoaE family.

It localises to the cytoplasm. It carries out the reaction 3'-dephospho-CoA + ATP = ADP + CoA + H(+). Its pathway is cofactor biosynthesis; coenzyme A biosynthesis; CoA from (R)-pantothenate: step 5/5. Its function is as follows. Catalyzes the phosphorylation of the 3'-hydroxyl group of dephosphocoenzyme A to form coenzyme A. This chain is Dephospho-CoA kinase, found in Vibrio parahaemolyticus serotype O3:K6 (strain RIMD 2210633).